A 114-amino-acid polypeptide reads, in one-letter code: Large ribosomal subunit protein P2 (114 aa).

Over residues 74-83 (AAAAGGGGGD) the composition is skewed to gly residues. The disordered stretch occupies residues 74–114 (AAAAGGGGGDAPAAAAEEPKKEEKSEEESDEELGFSLFDDN). Positions 98 to 114 (SEEESDEELGFSLFDDN) are enriched in acidic residues.

Belongs to the eukaryotic ribosomal protein P1/P2 family. P1 and P2 exist as dimers at the large ribosomal subunit. Post-translationally, phosphorylated.

Functionally, plays an important role in the elongation step of protein synthesis. This is Large ribosomal subunit protein P2 from Parthenium argentatum (Guayule rubber plant).